We begin with the raw amino-acid sequence, 109 residues long: Putative ankyrin repeat protein L482 (109 aa).

ANK repeat units lie at residues 1-26 (YLTEISGKGHIEIVKCLVNLGANITT), 27-56 (NNNYAIIQASEKGHLEVVKYLVGQNANIRS), 57-86 (ENNLAVRLASGNGHLEVVEYLVNLGADIRS), and 88-109 (NNYAIQSASQNGHLEVIEYLVA).

The polypeptide is Putative ankyrin repeat protein L482 (Acanthamoeba polyphaga (Amoeba)).